The following is a 264-amino-acid chain: Ribonuclease HII (264 aa).

In terms of domain architecture, RNase H type-2 spans 33 to 224 (GPVAGVDEVG…VRRVASGSNT (192 aa)). 3 residues coordinate a divalent metal cation: Asp39, Glu40, and Asp133. The disordered stretch occupies residues 222 to 264 (SNTAEVADGQPDPRDGTAQTGEGRWSKSSHPATMRATGRAQGT).

This sequence belongs to the RNase HII family. Mn(2+) is required as a cofactor. The cofactor is Mg(2+).

It localises to the cytoplasm. It catalyses the reaction Endonucleolytic cleavage to 5'-phosphomonoester.. Its function is as follows. Endonuclease that specifically degrades the RNA of RNA-DNA hybrids. In Mycobacterium bovis (strain BCG / Pasteur 1173P2), this protein is Ribonuclease HII.